Reading from the N-terminus, the 51-residue chain is Large ribosomal subunit protein bL33 (51 aa).

The protein belongs to the bacterial ribosomal protein bL33 family.

This is Large ribosomal subunit protein bL33 from Francisella tularensis subsp. tularensis (strain FSC 198).